The chain runs to 88 residues: Small ribosomal subunit protein bS20 (88 aa).

A disordered region spans residues 1-28 (MANTSSAKKATRKIARRTAVNKSRRTQM).

Binds directly to 16S ribosomal RNA. This Rhodopseudomonas palustris (strain ATCC BAA-98 / CGA009) protein is Small ribosomal subunit protein bS20.